A 1007-amino-acid chain; its full sequence is Retinoblastoma-related protein (1007 aa).

The tract at residues 406–604 (TPVTTAMTTA…EKGSSMYNSL (199 aa)) is domain A. The tract at residues 406–856 (TPVTTAMTTA…NEIFIPAVKP (451 aa)) is pocket. Residues 605-725 (IVARAALSAE…PGREGETCAE (121 aa)) are spacer. Positions 644-665 (PVPSLQKRESSPGQNGDIRSPK) are disordered. Positions 726–856 (TGINIFFSKI…NEIFIPAVKP (131 aa)) are domain B.

This sequence belongs to the retinoblastoma protein (RB) family.

The protein resides in the nucleus. Regulator of biological processes that recruits a histone deacetylase to control gene transcription. May play a role in the entry into mitosis, negatively regulating the cell proliferation. Formation of stable complexes with geminiviridae replication-associated proteins may create a cellular environment which favors viral DNA replication. This Vitis vinifera (Grape) protein is Retinoblastoma-related protein (RBR).